A 550-amino-acid chain; its full sequence is Formate--tetrahydrofolate ligase (550 aa).

62–69 (TPAGEGKS) serves as a coordination point for ATP.

The protein belongs to the formate--tetrahydrofolate ligase family.

It carries out the reaction (6S)-5,6,7,8-tetrahydrofolate + formate + ATP = (6R)-10-formyltetrahydrofolate + ADP + phosphate. It functions in the pathway one-carbon metabolism; tetrahydrofolate interconversion. This is Formate--tetrahydrofolate ligase from Corynebacterium diphtheriae (strain ATCC 700971 / NCTC 13129 / Biotype gravis).